A 444-amino-acid polypeptide reads, in one-letter code: MFLNPVVPNGYYNLRGGAMQSKATPIREDGIYHSFCGLVSVGWLYQKIKDSFFLILGTHTCAHLLQNTLGVMIFARPRFAVSLLEESDLSSSQPDISAQIEEIKREHHPSVIFLLSSCTPEVMKVEFEGLAASVSTPEVPVLFVPASGLDYTFSQSEDSVLQALIPFCPPAPPDDKRVVFLGSVNDAIADDFSLEAARLGIPVAGFLPASHFTELPPIGPGTVIAPLQPYLHKTATQLRNERGCTVLSSLFPFGPDGTRRFWEDLAAQFGMQVDLSEREAAAWERIKHHTDLLRGKKIFFASDTLMELPLARFLKACGAEVVECSTPYINRRFHAAELAALDGVRLVEQANFHRQLRTITETKPDLIISNIITTNPLVGQGTVAKWGTEYCFLPIHGWAGVNNLVTSFTRALQRHARLDPLGSDPIWLTGMMPGSSGGVISLQS.

The [4Fe-4S] cluster site is built by C36, C61, and C118.

Belongs to the BchN/ChlN family. As to quaternary structure, protochlorophyllide reductase is composed of three subunits; BchL, BchN and BchB. Forms a heterotetramer of two BchB and two BchN subunits. It depends on [4Fe-4S] cluster as a cofactor.

It catalyses the reaction chlorophyllide a + oxidized 2[4Fe-4S]-[ferredoxin] + 2 ADP + 2 phosphate = protochlorophyllide a + reduced 2[4Fe-4S]-[ferredoxin] + 2 ATP + 2 H2O. Its pathway is porphyrin-containing compound metabolism; bacteriochlorophyll biosynthesis (light-independent). Component of the dark-operative protochlorophyllide reductase (DPOR) that uses Mg-ATP and reduced ferredoxin to reduce ring D of protochlorophyllide (Pchlide) to form chlorophyllide a (Chlide). This reaction is light-independent. The NB-protein (BchN-BchB) is the catalytic component of the complex. The protein is Light-independent protochlorophyllide reductase subunit N of Chloroflexus aurantiacus (strain ATCC 29366 / DSM 635 / J-10-fl).